We begin with the raw amino-acid sequence, 576 residues long: Alpha-1,3-arabinosyltransferase XAT3 (576 aa).

Topologically, residues 1 to 19 (MKAGERPKLVRGVRQESRR) are cytoplasmic. Residues 20-40 (FRLLVIVVGFFLVSLTFVFVS) traverse the membrane as a helical; Signal-anchor for type II membrane protein segment. Residues 41 to 576 (KPDAILFSLN…LLEALDNLNP (536 aa)) lie on the Lumenal side of the membrane. Positions 64–171 (IQQKVNEPSG…KHKVTLPTVS (108 aa)) are disordered. 3 stretches are compositionally biased toward basic and acidic residues: residues 73 to 98 (GESR…DAKP), 126 to 138 (THNK…KSHQ), and 147 to 163 (GESK…EQKH). 3 N-linked (GlcNAc...) asparagine glycosylation sites follow: Asn172, Asn375, and Asn443.

It belongs to the glycosyltransferase 61 family.

It is found in the golgi apparatus membrane. Its pathway is glycan metabolism. Functionally, glycosyltransferase involved in the arabinosylation of xylan, the major hemicellulose (non-cellulosic component) of primary and secondary walls of angiosperms. Possesses alpha-1,3-arabinosyltransferase activity, transferring an arabinofuranose residue to the xylan backbone. The protein is Alpha-1,3-arabinosyltransferase XAT3 of Oryza sativa subsp. japonica (Rice).